We begin with the raw amino-acid sequence, 142 residues long: Large ribosomal subunit protein uL13 (142 aa).

It belongs to the universal ribosomal protein uL13 family. As to quaternary structure, part of the 50S ribosomal subunit.

Its function is as follows. This protein is one of the early assembly proteins of the 50S ribosomal subunit, although it is not seen to bind rRNA by itself. It is important during the early stages of 50S assembly. This chain is Large ribosomal subunit protein uL13, found in Nitrosococcus oceani (strain ATCC 19707 / BCRC 17464 / JCM 30415 / NCIMB 11848 / C-107).